Reading from the N-terminus, the 235-residue chain is 1-(5-phosphoribosyl)-5-[(5-phosphoribosylamino)methylideneamino] imidazole-4-carboxamide isomerase (235 aa).

The active-site Proton acceptor is the D8. Catalysis depends on D128, which acts as the Proton donor.

The protein belongs to the HisA/HisF family.

Its subcellular location is the cytoplasm. It carries out the reaction 1-(5-phospho-beta-D-ribosyl)-5-[(5-phospho-beta-D-ribosylamino)methylideneamino]imidazole-4-carboxamide = 5-[(5-phospho-1-deoxy-D-ribulos-1-ylimino)methylamino]-1-(5-phospho-beta-D-ribosyl)imidazole-4-carboxamide. It participates in amino-acid biosynthesis; L-histidine biosynthesis; L-histidine from 5-phospho-alpha-D-ribose 1-diphosphate: step 4/9. The polypeptide is 1-(5-phosphoribosyl)-5-[(5-phosphoribosylamino)methylideneamino] imidazole-4-carboxamide isomerase (Thermus thermophilus (strain ATCC BAA-163 / DSM 7039 / HB27)).